Here is a 417-residue protein sequence, read N- to C-terminus: GPI mannosyltransferase 2 (417 aa).

A run of 9 helical transmembrane segments spans residues 10-30, 104-124, 142-162, 167-187, 206-226, 239-259, 312-332, 344-364, and 394-414; these read FLII…LVWL, IVLK…WIVY, LALT…LISV, IAFT…SFDV, FCFA…LFYV, ITSI…FVYF, IPNF…ITYF, YIWI…VQII, and YYVM…ACFL.

It belongs to the PIGV family.

The protein localises to the endoplasmic reticulum membrane. The protein operates within glycolipid biosynthesis; glycosylphosphatidylinositol-anchor biosynthesis. Mannosyltransferase involved in glycosylphosphatidylinositol-anchor biosynthesis. Transfers the second mannose to the glycosylphosphatidylinositol during GPI precursor assembly. The chain is GPI mannosyltransferase 2 (GPI18) from Kluyveromyces lactis (strain ATCC 8585 / CBS 2359 / DSM 70799 / NBRC 1267 / NRRL Y-1140 / WM37) (Yeast).